The following is a 462-amino-acid chain: Argininosuccinate lyase (462 aa).

The protein belongs to the lyase 1 family. Argininosuccinate lyase subfamily.

It is found in the cytoplasm. The catalysed reaction is 2-(N(omega)-L-arginino)succinate = fumarate + L-arginine. It participates in amino-acid biosynthesis; L-arginine biosynthesis; L-arginine from L-ornithine and carbamoyl phosphate: step 3/3. In Bacillus thuringiensis (strain Al Hakam), this protein is Argininosuccinate lyase.